The sequence spans 533 residues: Probable ribonuclease ZC3H12D (533 aa).

In terms of domain architecture, RNase NYN spans 92–246 (LRPIVIDGSN…PLGRRGPTLS (155 aa)). The C3H1-type zinc-finger motif lies at 251-282 (KKPRPPEPSWQHCPYGKKCTYGVKCRFYHPER). Positions 262 to 368 (HCPYGKKCTY…ASGVVSQSRG (107 aa)) are necessary for interaction with ZC3H12A. A disordered region spans residues 302–335 (LGGGAEEPRTPSARSRPTTARLLPQEPGEHDLPP).

The protein belongs to the ZC3H12 family. As to quaternary structure, interacts with ZC3H12A. Mg(2+) is required as a cofactor. As to expression, expressed at low levels in bone marrow derived macrophages.

The protein resides in the cytoplasm. Its subcellular location is the P-body. May regulate cell growth likely by suppressing RB1 phosphorylation. May function as RNase and regulate the levels of target RNA species (Potential). In association with ZC3H12A enhances the degradation of interleukin IL-6 mRNA level in activated macrophages. Serve as a tumor suppressor in certain leukemia cells. Overexpression inhibits the G1 to S phase progression through suppression of RB1 phosphorylation. This Mus musculus (Mouse) protein is Probable ribonuclease ZC3H12D.